Reading from the N-terminus, the 335-residue chain is Phospholipid scramblase 1 (335 aa).

The proline-rich domain (PRD) stretch occupies residues 1-101; the sequence is MEKHGPPEHA…NHPGGPGGTP (101 aa). The tract at residues 1 to 102 is disordered; the sequence is MEKHGPPEHA…HPGGPGGTPW (102 aa). Topologically, residues 1–305 are cytoplasmic; the sequence is MEKHGPPEHA…IQFPLDLDVK (305 aa). Repeat copies occupy residues 23-29, 30-36, 37-43, 44-50, 51-57, and 58-64. Residues 23–71 form a 7 X 7 AA tandem repeats of Q-G-P-Y-[AP]-G-P region; it reads QGPYPGPQGPYPGPQGPYAGPQGPYPGPQGPYAGPQGPYPGPQPGYPVP. Over residues 26–37 the composition is skewed to pro residues; sequence YPGPQGPYPGPQ. The segment covering 59 to 72 has biased composition (pro residues); that stretch reads GPYPGPQPGYPVPP. The SH3-binding 1 signature appears at 64-72; that stretch reads PQPGYPVPP. The 7; approximate repeat unit spans residues 65 to 71; sequence QPGYPVP. Tyr91 bears the Phosphotyrosine; by ABL mark. The SH3-binding 2 signature appears at 101–109; it reads PWMQAPPPP. Thr178 bears the Phosphothreonine; by PKC/PRKCD mark. 4 S-palmitoyl cysteine lipidation sites follow: Cys201, Cys202, Cys205, and Cys206. Positions 274-283 match the Nuclear localization signal motif; it reads GKISKQWSGF. Residues 306 to 322 traverse the membrane as a helical segment; it reads MKAVMLGACFLIDFMFF. The Extracellular portion of the chain corresponds to 323–335; it reads ERTGNEEQRSGVW.

Belongs to the phospholipid scramblase family. Forms homooligomers in the presence of calcium. Interacts with ABL. Interacts with RELT, RELL1 and RELL2. Interacts with OXSR1 in the presence of RELT. Interacts with OCLN, TOP2A and TOP2B. Interacts with TRPC1, TRPC4 and TRPC5. Interacts with ILDR1. The cofactor is Ca(2+). Requires Mg(2+) as cofactor. Zn(2+) serves as cofactor. Phosphorylated on tyrosine residues. Phosphorylated by OXSR1 in the presence of RELT. Phosphorylation at Thr-178 by PKC/PKCD increases its phospholipid scramblase activity during both cell stimulation and apoptosis. Post-translationally, palmitoylation is required for its phospholipid scramblase activity. Palmitoylation regulates its localization to the cell membrane or the nucleus; trafficking to the cell membrane is dependent upon palmitoylation whereas in the absence of palmitoylation, localizes to the nucleus.

It is found in the cell membrane. The protein resides in the nucleus. The protein localises to the cytoplasm. It localises to the perinuclear region. The enzyme catalyses a 1,2-diacyl-sn-glycero-3-phosphocholine(in) = a 1,2-diacyl-sn-glycero-3-phosphocholine(out). The catalysed reaction is a 1,2-diacyl-sn-glycero-3-phosphoethanolamine(in) = a 1,2-diacyl-sn-glycero-3-phosphoethanolamine(out). It carries out the reaction a 1,2-diacyl-sn-glycero-3-phospho-L-serine(in) = a 1,2-diacyl-sn-glycero-3-phospho-L-serine(out). Catalyzes calcium-induced ATP-independent rapid bidirectional and non-specific distribution of phospholipids (lipid scrambling or lipid flip-flop) between the inner and outer leaflet of the plasma membrane resulting in collapse of the phospholipid asymmetry which leads to phosphatidylserine externalization on the cell surface. Mediates calcium-dependent phosphatidylserine externalization and apoptosis in neurons via its association with TRPC5. Also exhibits magnesium-dependent nuclease activity against double-stranded DNA and RNA but not single-stranded DNA and can enhance DNA decatenation mediated by TOP2A. Negatively regulates FcR-mediated phagocytosis in differentiated macrophages. May contribute to cytokine-regulated cell proliferation and differentiation. The polypeptide is Phospholipid scramblase 1 (Plscr1) (Rattus norvegicus (Rat)).